The primary structure comprises 348 residues: NADH-ubiquinone oxidoreductase chain 2 (348 aa).

9 consecutive transmembrane segments (helical) span residues 3–23 (PYVL…TFAS), 60–80 (FLTQ…NAWM), 96–116 (TMFM…FWMP), 149–169 (IDPL…GWGG), 178–197 (ILAY…IQYA), 202–219 (LLAL…FLTL), 246–266 (LVLL…KWLI), 274–294 (DLPI…YFYL), and 326–346 (LALF…ILTL).

Belongs to the complex I subunit 2 family.

It localises to the mitochondrion inner membrane. The enzyme catalyses a ubiquinone + NADH + 5 H(+)(in) = a ubiquinol + NAD(+) + 4 H(+)(out). In terms of biological role, core subunit of the mitochondrial membrane respiratory chain NADH dehydrogenase (Complex I) that is believed to belong to the minimal assembly required for catalysis. Complex I functions in the transfer of electrons from NADH to the respiratory chain. The immediate electron acceptor for the enzyme is believed to be ubiquinone. This Carassius auratus (Goldfish) protein is NADH-ubiquinone oxidoreductase chain 2 (MT-ND2).